The primary structure comprises 322 residues: Zinc finger C2HC domain-containing protein zchc-1A (322 aa).

2 consecutive C2HC/C3H-type zinc fingers follow at residues 9 to 38 (PTFP…LASL) and 119 to 148 (DYVQ…QATR). Cysteine 13, cysteine 16, histidine 28, cysteine 32, cysteine 123, cysteine 126, histidine 138, and cysteine 142 together coordinate Zn(2+). A compositionally biased stretch (polar residues) spans 150–159 (QGGNLKSSGG). The segment at 150–322 (QGGNLKSSGG…SRNNSRSRIF (173 aa)) is disordered. Basic and acidic residues predominate over residues 174 to 220 (NEGKKQESSSRNGSAERKPTTRGRDGSLLRARRDDSNDITSRRKSLD). Polar residues-rich tracts occupy residues 221-238 (TRTS…TSLS) and 264-274 (LQQSSTPQQRL). Positions 276–295 (TPASTTTTASRSGSRTSSRA) are enriched in low complexity. Basic and acidic residues predominate over residues 296 to 305 (CPRDDSRDSR). Residues 311–322 (NNSRNNSRSRIF) show a composition bias toward low complexity.

Belongs to the ZC2HC1 family. Zn(2+) serves as cofactor.

The chain is Zinc finger C2HC domain-containing protein zchc-1A from Caenorhabditis elegans.